The following is a 353-amino-acid chain: Methylthioribose-1-phosphate isomerase (353 aa).

D241 serves as the catalytic Proton donor.

It belongs to the eIF-2B alpha/beta/delta subunits family. MtnA subfamily.

The protein localises to the cytoplasm. The protein resides in the nucleus. It catalyses the reaction 5-(methylsulfanyl)-alpha-D-ribose 1-phosphate = 5-(methylsulfanyl)-D-ribulose 1-phosphate. It participates in amino-acid biosynthesis; L-methionine biosynthesis via salvage pathway; L-methionine from S-methyl-5-thio-alpha-D-ribose 1-phosphate: step 1/6. In terms of biological role, catalyzes the interconversion of methylthioribose-1-phosphate (MTR-1-P) into methylthioribulose-1-phosphate (MTRu-1-P). The polypeptide is Methylthioribose-1-phosphate isomerase (mri1) (Danio rerio (Zebrafish)).